The primary structure comprises 391 residues: Acetate kinase (391 aa).

N4 contributes to the Mg(2+) binding site. K11 is an ATP binding site. R85 is a substrate binding site. The Proton donor/acceptor role is filled by D142. ATP is bound by residues H202–G206, D277–R279, and G325–N329. Mg(2+) is bound at residue E378.

It belongs to the acetokinase family. In terms of assembly, homodimer. Mg(2+) serves as cofactor. Mn(2+) is required as a cofactor.

Its subcellular location is the cytoplasm. It catalyses the reaction acetate + ATP = acetyl phosphate + ADP. Its pathway is metabolic intermediate biosynthesis; acetyl-CoA biosynthesis; acetyl-CoA from acetate: step 1/2. Its function is as follows. Catalyzes the formation of acetyl phosphate from acetate and ATP. Can also catalyze the reverse reaction. This Halalkalibacterium halodurans (strain ATCC BAA-125 / DSM 18197 / FERM 7344 / JCM 9153 / C-125) (Bacillus halodurans) protein is Acetate kinase.